Here is a 221-residue protein sequence, read N- to C-terminus: Small ribosomal subunit protein uS3 (221 aa).

The region spanning 39-108 (IRKFVKKELF…NVLINIVEVK (70 aa)) is the KH type-2 domain.

It belongs to the universal ribosomal protein uS3 family. Part of the 30S ribosomal subunit. Forms a tight complex with proteins S10 and S14.

Binds the lower part of the 30S subunit head. Binds mRNA in the 70S ribosome, positioning it for translation. The chain is Small ribosomal subunit protein uS3 from Clostridium beijerinckii (strain ATCC 51743 / NCIMB 8052) (Clostridium acetobutylicum).